A 1989-amino-acid polypeptide reads, in one-letter code: Exophilin-5 (1989 aa).

Positions 7 to 63 (AFDFSFLNDEEARKILQVLERNEELQRAEKDRISKLQKTKRDIRWLQGVTGEWFEEI) constitute a RabBD domain. 2 disordered regions span residues 93-117 (NDPI…PFSS) and 348-391 (TQSK…FLRA). Polar residues-rich tracts occupy residues 100-111 (TSRSKNVTNQKK) and 359-376 (HQQS…WNRS). A compositionally biased stretch (basic and acidic residues) spans 377–389 (DSSRDRENQEEFL). Residue S603 is modified to Phosphoserine. Disordered regions lie at residues 631 to 651 (FSQI…NPTV), 806 to 827 (STAS…RTDQ), and 882 to 933 (AALP…NQKN). Positions 641–651 (PQSPNLQNPTV) are enriched in polar residues. Phosphoserine is present on residues S806 and S809. Positions 891–909 (KNSSLDAPVVPSTTVFSRR) are enriched in polar residues. The span at 910 to 927 (SPSDKDPSLGEREEKDNA) shows a compositional bias: basic and acidic residues. A phosphoserine mark is found at S1028 and S1086. Disordered stretches follow at residues 1094–1113 (EATE…VRKG), 1124–1152 (SCPS…ASEL), and 1365–1493 (EIFS…TNCQ). Residues 1098–1110 (RMTNVKSSGSTSV) show a composition bias toward polar residues. S1124 is subject to Phosphoserine. Over residues 1379 to 1390 (SENKKERGKKLQ) the composition is skewed to basic and acidic residues. Over residues 1416-1431 (SINSSNSGPSSLPALS) the composition is skewed to low complexity. Polar residues predominate over residues 1434 to 1447 (NIGNSQTRRSSWEC). S1505 is subject to Phosphoserine. 2 disordered regions span residues 1521-1590 (EETQ…NRSS) and 1644-1737 (PEPT…PITF). Composition is skewed to basic and acidic residues over residues 1551–1560 (ESRKAEDEMQ), 1573–1589 (NKNK…ENRS), and 1658–1670 (RLSE…KKSE). Polar residues predominate over residues 1685–1709 (THVSNQKSNSISQRHQNEFKNVSES). Phosphoserine occurs at positions 1753, 1768, 1821, and 1851. A disordered region spans residues 1921 to 1989 (FLKDDLRNPP…LDENDKESEL (69 aa)). The span at 1933–1943 (SESLSSNSPSS) shows a compositional bias: low complexity. Residues 1959 to 1989 (YEDDPVDSDCDTDTTTDDEYYLDENDKESEL) show a composition bias toward acidic residues.

In terms of assembly, interacts with RAB27A. As to expression, expressed in keratinocytes.

Its function is as follows. May act as Rab effector protein and play a role in vesicle trafficking. In Homo sapiens (Human), this protein is Exophilin-5.